Reading from the N-terminus, the 686-residue chain is MAM domain-containing protein 2 (686 aa).

The N-terminal stretch at 1-18 is a signal peptide; it reads MLLEGVLLVVQALQLASA. MAM domains lie at 24–169, 168–329, 340–498, and 507–666; these read GSCA…YCIE, IECD…HCQN, TSCD…NCRS, and GECT…PCAG. 2 N-linked (GlcNAc...) asparagine glycosylation sites follow: Asn-134 and Asn-329. Residue Asn-524 is glycosylated (N-linked (GlcNAc...) asparagine). A disordered region spans residues 665 to 686; the sequence is AGMEDTTEQSSGYSEDLNEIEY.

O-glycosylated; contains chondroitin sulfate.

The protein localises to the secreted. It is found in the extracellular space. The protein resides in the extracellular matrix. This chain is MAM domain-containing protein 2 (Mamdc2), found in Mus musculus (Mouse).